Reading from the N-terminus, the 150-residue chain is Large ribosomal subunit protein bL9 (150 aa).

Belongs to the bacterial ribosomal protein bL9 family.

Functionally, binds to the 23S rRNA. In Alcanivorax borkumensis (strain ATCC 700651 / DSM 11573 / NCIMB 13689 / SK2), this protein is Large ribosomal subunit protein bL9.